The sequence spans 437 residues: UDP-N-acetylmuramate--L-alanine ligase (437 aa).

Position 114–120 (114–120 (GTHGKTS)) interacts with ATP.

Belongs to the MurCDEF family.

It localises to the cytoplasm. The enzyme catalyses UDP-N-acetyl-alpha-D-muramate + L-alanine + ATP = UDP-N-acetyl-alpha-D-muramoyl-L-alanine + ADP + phosphate + H(+). It participates in cell wall biogenesis; peptidoglycan biosynthesis. Cell wall formation. The chain is UDP-N-acetylmuramate--L-alanine ligase from Lactobacillus acidophilus (strain ATCC 700396 / NCK56 / N2 / NCFM).